A 1299-amino-acid chain; its full sequence is Phosphoribosylformylglycinamidine synthase (1299 aa).

ATP contacts are provided by residues 310–321 (GAATGAGGEIRD), 389–391 (TGY), and Ala-680. Mg(2+) is bound by residues Asp-681, Glu-720, Asn-724, and Asp-888. Ser-890 serves as a coordination point for ATP. In terms of domain architecture, Glutamine amidotransferase type-1 spans 1046–1299 (VAVLREQGVN…MFRNARVWLG (254 aa)). Cys-1139 acts as the Nucleophile in catalysis. Catalysis depends on residues His-1264 and Glu-1266.

The protein in the N-terminal section; belongs to the FGAMS family. In terms of assembly, monomer.

The protein resides in the cytoplasm. It catalyses the reaction N(2)-formyl-N(1)-(5-phospho-beta-D-ribosyl)glycinamide + L-glutamine + ATP + H2O = 2-formamido-N(1)-(5-O-phospho-beta-D-ribosyl)acetamidine + L-glutamate + ADP + phosphate + H(+). It participates in purine metabolism; IMP biosynthesis via de novo pathway; 5-amino-1-(5-phospho-D-ribosyl)imidazole from N(2)-formyl-N(1)-(5-phospho-D-ribosyl)glycinamide: step 1/2. Phosphoribosylformylglycinamidine synthase involved in the purines biosynthetic pathway. Catalyzes the ATP-dependent conversion of formylglycinamide ribonucleotide (FGAR) and glutamine to yield formylglycinamidine ribonucleotide (FGAM) and glutamate. This Myxococcus xanthus (strain DK1622) protein is Phosphoribosylformylglycinamidine synthase.